A 179-amino-acid chain; its full sequence is Adenine phosphoribosyltransferase (179 aa).

It belongs to the purine/pyrimidine phosphoribosyltransferase family. Homodimer.

It localises to the cytoplasm. The catalysed reaction is AMP + diphosphate = 5-phospho-alpha-D-ribose 1-diphosphate + adenine. Its pathway is purine metabolism; AMP biosynthesis via salvage pathway; AMP from adenine: step 1/1. Its function is as follows. Catalyzes a salvage reaction resulting in the formation of AMP, that is energically less costly than de novo synthesis. The protein is Adenine phosphoribosyltransferase of Helicobacter pylori (strain HPAG1).